The primary structure comprises 993 residues: UPF0182 protein MAV_4137 (993 aa).

7 helical membrane passes run 18–38 (ILILIALGVIALLLAGPRLID), 63–83 (FVVFLIAGLLVGGIVFAGLAV), 113–133 (LVSIGVPVAIGLLAGIIAQSY), 175–195 (FVAVFLAFVANLLAHYIFGGI), 210–230 (IQLVTLVGLLVLLKAVAYWLD), 254–274 (AVLPAKLILMAIALICAAAVF), and 287–307 (IGLVLLLLSSLIVGAGWPLIV). A disordered region spans residues 903–941 (NIQPTEGGAPAASPPANAPAPAVTPGSAPPVAAPPVPDG). The span at 929–939 (SAPPVAAPPVP) shows a compositional bias: pro residues.

The protein belongs to the UPF0182 family.

The protein resides in the cell membrane. In Mycobacterium avium (strain 104), this protein is UPF0182 protein MAV_4137.